The following is a 292-amino-acid chain: Ribosomal protein L11 methyltransferase (292 aa).

S-adenosyl-L-methionine is bound by residues Thr145, Gly166, Asp188, and Asn229.

The protein belongs to the methyltransferase superfamily. PrmA family.

The protein resides in the cytoplasm. The enzyme catalyses L-lysyl-[protein] + 3 S-adenosyl-L-methionine = N(6),N(6),N(6)-trimethyl-L-lysyl-[protein] + 3 S-adenosyl-L-homocysteine + 3 H(+). Its function is as follows. Methylates ribosomal protein L11. This chain is Ribosomal protein L11 methyltransferase, found in Alteromonas mediterranea (strain DSM 17117 / CIP 110805 / LMG 28347 / Deep ecotype).